The following is a 155-amino-acid chain: Ribosomal RNA large subunit methyltransferase H (155 aa).

Residues Leu-72, Gly-103, and 122–127 contribute to the S-adenosyl-L-methionine site; that span reads LSPLTL.

It belongs to the RNA methyltransferase RlmH family. In terms of assembly, homodimer.

The protein localises to the cytoplasm. It catalyses the reaction pseudouridine(1915) in 23S rRNA + S-adenosyl-L-methionine = N(3)-methylpseudouridine(1915) in 23S rRNA + S-adenosyl-L-homocysteine + H(+). Its function is as follows. Specifically methylates the pseudouridine at position 1915 (m3Psi1915) in 23S rRNA. This chain is Ribosomal RNA large subunit methyltransferase H, found in Aeromonas hydrophila subsp. hydrophila (strain ATCC 7966 / DSM 30187 / BCRC 13018 / CCUG 14551 / JCM 1027 / KCTC 2358 / NCIMB 9240 / NCTC 8049).